The following is a 187-amino-acid chain: Large ribosomal subunit protein uL5 (187 aa).

It belongs to the universal ribosomal protein uL5 family. Part of the 50S ribosomal subunit; part of the 5S rRNA/L5/L18/L25 subcomplex. Contacts the 5S rRNA and the P site tRNA. Forms a bridge to the 30S subunit in the 70S ribosome.

This is one of the proteins that bind and probably mediate the attachment of the 5S RNA into the large ribosomal subunit, where it forms part of the central protuberance. In the 70S ribosome it contacts protein S13 of the 30S subunit (bridge B1b), connecting the 2 subunits; this bridge is implicated in subunit movement. Contacts the P site tRNA; the 5S rRNA and some of its associated proteins might help stabilize positioning of ribosome-bound tRNAs. This Mycobacteroides abscessus (strain ATCC 19977 / DSM 44196 / CCUG 20993 / CIP 104536 / JCM 13569 / NCTC 13031 / TMC 1543 / L948) (Mycobacterium abscessus) protein is Large ribosomal subunit protein uL5.